The following is a 467-amino-acid chain: Ribulose bisphosphate carboxylase large chain (467 aa).

A propeptide spanning residues 1-2 (MS) is cleaved from the precursor. Position 3 is an N-acetylproline (P3). Position 14 is an N6,N6,N6-trimethyllysine (K14). Substrate contacts are provided by N123 and T173. K175 functions as the Proton acceptor in the catalytic mechanism. K177 provides a ligand contact to substrate. K201, D203, and E204 together coordinate Mg(2+). Position 201 is an N6-carboxylysine (K201). Catalysis depends on H294, which acts as the Proton acceptor. Substrate contacts are provided by R295, H327, and S379.

It belongs to the RuBisCO large chain family. Type I subfamily. Heterohexadecamer of 8 large chains and 8 small chains; disulfide-linked. The disulfide link is formed within the large subunit homodimers. Mg(2+) serves as cofactor. Post-translationally, the disulfide bond which can form in the large chain dimeric partners within the hexadecamer appears to be associated with oxidative stress and protein turnover.

The protein localises to the plastid. The protein resides in the chloroplast. The enzyme catalyses 2 (2R)-3-phosphoglycerate + 2 H(+) = D-ribulose 1,5-bisphosphate + CO2 + H2O. The catalysed reaction is D-ribulose 1,5-bisphosphate + O2 = 2-phosphoglycolate + (2R)-3-phosphoglycerate + 2 H(+). Functionally, ruBisCO catalyzes two reactions: the carboxylation of D-ribulose 1,5-bisphosphate, the primary event in carbon dioxide fixation, as well as the oxidative fragmentation of the pentose substrate in the photorespiration process. Both reactions occur simultaneously and in competition at the same active site. This is Ribulose bisphosphate carboxylase large chain from Serenoa repens (Saw palmetto).